We begin with the raw amino-acid sequence, 60 residues long: Temporin-CG1 (60 aa).

Residues 1-22 (MFTLKKSLLLLFFLATINLSLC) form the signal peptide. Residues 23–43 (EQERNAEEERRDDDERNAEVE) constitute a propeptide, removed in mature form.

Expressed by the skin glands.

It is found in the secreted. Antimicrobial peptide active against a variety of Gram-positive and some Gram-negative bacterial strains. Has antifungal activity against a slime mold isolate. Has weak hemolytic activity against human erythrocytes. The chain is Temporin-CG1 from Amolops chunganensis (Chungan torrent frog).